The sequence spans 865 residues: ABC transporter ATP-binding/permease protein Rv1747 (865 aa).

An FHA 1 domain is found at 29-78 (VVVGRDLRADVRVAHPLISRAHLLLRFDQGRWVAIDNGSLNGLYLNNRRV). The tract at residues 104–205 (GRHRGSAGRP…PAGARGGTEA (102 aa)) is disordered. Positions 135-156 (PQTGTLGSGQLQQLPPATTRIP) are enriched in low complexity. Thr152 bears the Phosphothreonine mark. Positions 157 to 166 (AAPPSGPQPR) are enriched in pro residues. Thr210 is modified (phosphothreonine). In terms of domain architecture, FHA 2 spans 230–279 (VRIGRANDNDIVIPEVLASRHHATLVPTPGGTEIRDNRSINGTFVNGARV). Residues 319–552 (LDVRGVTWTI…VMGTTNWADI (234 aa)) enclose the ABC transporter domain. Residue 352-359 (GPSGAGKS) coordinates ATP. Residues 596-810 (RQFSTIARRQ…TPARWGFAAS (215 aa)) enclose the ABC transmembrane type-2 domain. 6 consecutive transmembrane segments (helical) span residues 614-634 (GYFVFLALLPFIMGALSMSVP), 652-672 (PGQILVLLNVGAVFMGTALTI), 700-720 (VCVYTVLAVVQSAIVTVIVLV), 740-760 (FVDVAVTCVASAMLGLALSAI), 767-787 (IMPLLVVAVMSQLVFSGGMIP), and 836-856 (SAWWFDMAMLVALSVIYVGFV).

The protein in the central section; belongs to the ABC transporter superfamily. It in the C-terminal section; belongs to the ABC-2 integral membrane protein family. Homodimer. Interacts with PknF. In terms of processing, phosphorylated by PknF. Can probably be phosphorylated in vivo by other kinases when PknF is missing.

The protein localises to the cell membrane. Function is positively regulated by phosphorylation. Functionally, involved in the translocation of an unknown substrate across the membrane. Transmembrane domains (TMD) form a pore in the membrane and the ATP-binding domain (NBD) is responsible for energy generation. Required for virulence. The chain is ABC transporter ATP-binding/permease protein Rv1747 from Mycobacterium tuberculosis (strain ATCC 25618 / H37Rv).